Consider the following 665-residue polypeptide: Ion-translocating oxidoreductase complex subunit C (665 aa).

2 4Fe-4S ferredoxin-type domains span residues 368 to 398 and 408 to 437; these read EYAE…QQLY and KSEE…IQYF. Residues C378, C381, C384, C388, C417, C420, C423, and C427 each contribute to the [4Fe-4S] cluster site. Basic and acidic residues-rich tracts occupy residues 465–477 and 485–513; these read QARM…ERKA and ARRE…KANE. Disordered regions lie at residues 465–568, 580–623, and 637–665; these read QARM…DAKK, AKKL…LDPK, and KKLA…QIVR. Polar residues-rich tracts occupy residues 554–564 and 585–600; these read VENQEQQTQPT and QTNS…QTAE. A compositionally biased stretch (basic and acidic residues) spans 602–615; it reads EVEKTKSAVEKTEE. Residues 643–656 show a composition bias toward polar residues; sequence NSTSEAISNSQTAE.

Belongs to the 4Fe4S bacterial-type ferredoxin family. RnfC subfamily. As to quaternary structure, the complex is composed of six subunits: RnfA, RnfB, RnfC, RnfD, RnfE and RnfG. Requires [4Fe-4S] cluster as cofactor.

The protein resides in the cell inner membrane. In terms of biological role, part of a membrane-bound complex that couples electron transfer with translocation of ions across the membrane. The chain is Ion-translocating oxidoreductase complex subunit C from Haemophilus influenzae (strain 86-028NP).